A 328-amino-acid chain; its full sequence is 5,10-methylenetetrahydromethanopterin reductase (328 aa).

The protein belongs to the mer family.

It is found in the cytoplasm. The enzyme catalyses 5-methyl-5,6,7,8-tetrahydromethanopterin + oxidized coenzyme F420-(gamma-L-Glu)(n) + H(+) = 5,10-methylenetetrahydromethanopterin + reduced coenzyme F420-(gamma-L-Glu)(n). It participates in one-carbon metabolism; methanogenesis from CO(2); methyl-coenzyme M from 5,10-methylene-5,6,7,8-tetrahydromethanopterin: step 1/2. Functionally, catalyzes the reversible reduction of methylene-H(4)MPT to methyl-H(4)MPT. The sequence is that of 5,10-methylenetetrahydromethanopterin reductase from Methanosarcina mazei (strain ATCC BAA-159 / DSM 3647 / Goe1 / Go1 / JCM 11833 / OCM 88) (Methanosarcina frisia).